We begin with the raw amino-acid sequence, 419 residues long: Putative nucleobase-ascorbate transporter 9 (419 aa).

Residues 1–22 (MANGAGNGGGGAGGNGGGGNNG) are compositionally biased toward gly residues. The segment at 1–28 (MANGAGNGGGGAGGNGGGGNNGAGNRAE) is disordered. 10 helical membrane passes run 64 to 84 (LLSLGITVLIPSLLVPLMGGG), 91 to 111 (VIQTLLFVSGLTTLFQSFFGT), 113 to 133 (LPVIASASYAYIIPITSIIYS), 153 to 173 (IQGALIITGCFQVLVCFLGVW), 184 to 204 (SIAPLVTFTGLGLYHIGFPLV), 220 to 240 (GMMLCIPVVWLFAQLLTSSGV), 273 to 293 (SFAMMAASFVTLFESTGLFYA), 313 to 333 (RVIQISAAFMLFFSIFGKFGA), 334 to 354 (FFASIPLPIMASLYCIVLCFV), and 370 to 390 (FNTKFILGFSFFMAISIPQYF).

This sequence belongs to the nucleobase:cation symporter-2 (NCS2) (TC 2.A.40) family.

It localises to the membrane. The protein is Putative nucleobase-ascorbate transporter 9 (NAT9) of Arabidopsis thaliana (Mouse-ear cress).